A 205-amino-acid polypeptide reads, in one-letter code: CD83 antigen (205 aa).

The first 19 residues, 1–19 (MSRGLQLLLLSCAYSLAPA), serve as a signal peptide directing secretion. Residues 20-114 (TPEVKVACSE…YRCTLQDPDG (95 aa)) form the Ig-like V-type domain. Residues 20-144 (TPEVKVACSE…EETFKKYRAE (125 aa)) lie on the Extracellular side of the membrane. A disulfide bond links C35 and C107. Residues 60–69 (METPQEDHLR) show a composition bias toward basic and acidic residues. The tract at residues 60–81 (METPQEDHLRGQHYHQKGQNGS) is disordered. Residues N79, N96, and N117 are each glycosylated (N-linked (GlcNAc...) asparagine). A helical transmembrane segment spans residues 145–166 (IVLLLALVIFYLTLIIFTCKFA). Residues 167–205 (RLQSIFPDFSKAGMERAFLPVTSPNKHLGLVTPHKTELV) lie on the Cytoplasmic side of the membrane.

In terms of assembly, monomer. Homodimer. Homotrimer. Interacts with MARCHF1; this interaction antagonizes MARCHF1-mediated MHC II and CD86 down-regulation. In terms of processing, glycosylated when expressed on activated dendritic cells. Expressed by activated lymphocytes, Langerhans cells and activatd dendritic cells.

It is found in the membrane. Transmembrane glycoprotein predominantly found on the surface of many immune cells including dendritic cells or lymphocytes that plays various roles in immune response regulation. Plays an essential role in CD4(+) T-selection, differentiation and stability by regulating the activity of the major E3 ubiquitin ligase responsible for controlling MHCII trafficking MARCHF8. Also inhibits MARCHF1 association with MHCII or CD86 to prevent their ubiquitination and subsequent degradation. In addition, acts as an important modulator of protective responses against acute infections. In Homo sapiens (Human), this protein is CD83 antigen (CD83).